Consider the following 345-residue polypeptide: MGNLKGVRIAGTGSYVPERIVTNEDLAALGCDSDWIVRRTGILQRRHAEPGQATSDLCYEAALRCLENANVSVDEIDLILVATITPDHPTPSTACHLQRRLGAVAPAMDIGAACAGFMYALVTGAQFVSNGNARNVLVIGADLMSRTVDPEDKKTYPLFGDAAGAALLVPSTQDECQSTECNGSAADSTIQTDGLLAYQLGSEGCGGEMLCIPAGGSRTPITTDGEDSASRYLQMDGRGVFKWAVRVFDESAKDVLRAANVSSDQLSLVVLHQANQRIIDSAVSDLNVPPEKVFVNLDKYGNTSGASIPLALDEAARAGRLKEGDLVLLCGFGAGLAWGTALFRW.

Residues C114 and H272 contribute to the active site. The ACP-binding stretch occupies residues 273-277; sequence QANQR. N302 is a catalytic residue.

This sequence belongs to the thiolase-like superfamily. FabH family. As to quaternary structure, homodimer.

It localises to the cytoplasm. The enzyme catalyses malonyl-[ACP] + acetyl-CoA + H(+) = 3-oxobutanoyl-[ACP] + CO2 + CoA. It participates in lipid metabolism; fatty acid biosynthesis. Functionally, catalyzes the condensation reaction of fatty acid synthesis by the addition to an acyl acceptor of two carbons from malonyl-ACP. Catalyzes the first condensation reaction which initiates fatty acid synthesis and may therefore play a role in governing the total rate of fatty acid production. Possesses both acetoacetyl-ACP synthase and acetyl transacylase activities. Its substrate specificity determines the biosynthesis of branched-chain and/or straight-chain of fatty acids. The chain is Beta-ketoacyl-[acyl-carrier-protein] synthase III from Rhodopirellula baltica (strain DSM 10527 / NCIMB 13988 / SH1).